The following is a 375-amino-acid chain: MANDAEDAVRSYLTSVKEDLMTGVSFMIPFVTIGGIFLALGYAVASLSNNVQDVFNSTGTAGWFLAQIGVAGLTLMVPVLGAYIAYAIADRPGLAPGFILSYIIQQGNVLQAAGDVIGLQGGSAGAGYLGAIVAGFLAGIVARWFKQRDVPEFIAPMMPVLLIPVATTAVLTPVMLFVLGVPISIANAGLTEFLSNMQGGGQAILLGGILGAMMAADMGGPINKVAYVFSVGLISEGVTAPMAAVMIAGMVPPIGLALSNFIAPQKYAAEMYENAKSGVLLGFSFITEGAIPYAAADPARVIPSVVAGSAVAGAASMALGVNMPAPHGGIFVVPLSNQPFMFIACILLGSIVTAVIATAIKPNFDAKMAAQSSDD.

One can recognise a PTS EIIC type-2 domain in the interval 16-370 (VKEDLMTGVS…KPNFDAKMAA (355 aa)). Transmembrane regions (helical) follow at residues 24–44 (VSFM…GYAV), 68–88 (IGVA…AYAI), 93–113 (GLAP…LQAA), 122–142 (GSAG…GIVA), 160–180 (VLLI…FVLG), 203–223 (AILL…GPIN), 238–258 (VTAP…GLAL), 279–299 (VLLG…ADPA), 301–321 (VIPS…ALGV), and 340–360 (FMFI…ATAI).

It is found in the cell membrane. Functionally, the phosphoenolpyruvate-dependent sugar phosphotransferase system (sugar PTS), a major carbohydrate active transport system, catalyzes the phosphorylation of incoming sugar substrates concomitantly with their translocation across the cell membrane. The enzyme II PtfABC PTS system is involved in fructose transport. The protein is PTS system fructose-specific EIIC component of Haloferax volcanii (strain ATCC 29605 / DSM 3757 / JCM 8879 / NBRC 14742 / NCIMB 2012 / VKM B-1768 / DS2) (Halobacterium volcanii).